We begin with the raw amino-acid sequence, 138 residues long: Large ribosomal subunit protein bL17 (138 aa).

The protein belongs to the bacterial ribosomal protein bL17 family. Part of the 50S ribosomal subunit. Contacts protein L32.

This Nitrobacter winogradskyi (strain ATCC 25391 / DSM 10237 / CIP 104748 / NCIMB 11846 / Nb-255) protein is Large ribosomal subunit protein bL17.